The following is a 40-amino-acid chain: Large ribosomal subunit protein bL36 (40 aa).

It belongs to the bacterial ribosomal protein bL36 family.

The sequence is that of Large ribosomal subunit protein bL36 from Corynebacterium urealyticum (strain ATCC 43042 / DSM 7109).